The following is a 429-amino-acid chain: Adenylosuccinate synthetase (429 aa).

Residues 12 to 18 and 40 to 42 contribute to the GTP site; these read GDEGKGK and GHT. The Proton acceptor role is filled by aspartate 13. Mg(2+) is bound by residues aspartate 13 and glycine 40. IMP contacts are provided by residues 13–16, 38–41, threonine 128, arginine 142, glutamine 223, threonine 238, and arginine 302; these read DEGK and NAGH. Histidine 41 (proton donor) is an active-site residue. 298-304 serves as a coordination point for substrate; the sequence is TVTGRPR. Residues arginine 304, 330–332, and 412–414 each bind GTP; these read LLD and SVG.

The protein belongs to the adenylosuccinate synthetase family. In terms of assembly, homodimer. Mg(2+) is required as a cofactor.

Its subcellular location is the cytoplasm. The catalysed reaction is IMP + L-aspartate + GTP = N(6)-(1,2-dicarboxyethyl)-AMP + GDP + phosphate + 2 H(+). It functions in the pathway purine metabolism; AMP biosynthesis via de novo pathway; AMP from IMP: step 1/2. Its function is as follows. Plays an important role in the de novo pathway of purine nucleotide biosynthesis. Catalyzes the first committed step in the biosynthesis of AMP from IMP. This is Adenylosuccinate synthetase from Limosilactobacillus fermentum (strain NBRC 3956 / LMG 18251) (Lactobacillus fermentum).